A 643-amino-acid chain; its full sequence is RNA-binding protein MEX3D (643 aa).

Disordered regions lie at residues 1–48 and 61–92; these read MPGS…DAAA and GLGG…APPD. A compositionally biased stretch (low complexity) spans 18-34; that stretch reads TAGDPGHPHPALAGAED. A compositionally biased stretch (acidic residues) spans 83-92; that stretch reads CGEDEPAPPD. KH domains are found at residues 160–221 and 253–314; these read MTEC…KREI and QTTI…REEI. 3 disordered regions span residues 357–427, 471–505, and 519–583; these read PHPG…GTAT, GAPA…GGLS, and VGAV…APGP. Residues 405-418 are compositionally biased toward gly residues; the sequence is GGSGNGGFTFGGDG. Thr-491 is modified (phosphothreonine). Ser-495 is modified (phosphoserine). Composition is skewed to low complexity over residues 495-505, 531-556, and 567-583; these read SPTLPEPGGLS, LPPF…SSTL, and PSTT…APGP. The RING-type zinc-finger motif lies at 592-632; it reads CVVCSEGEAMAALVPCGHNLFCMDCAVRICGKSEPECPACR.

Its subcellular location is the cytoplasm. The protein localises to the nucleus. RNA binding protein, may be involved in post-transcriptional regulatory mechanisms. This is RNA-binding protein MEX3D (Mex3d) from Mus musculus (Mouse).